The primary structure comprises 512 residues: Inosine-5'-monophosphate dehydrogenase (512 aa).

CBS domains lie at 110–169 (FIMK…SAPV) and 173–231 (MTRR…PNSS). Residues 268–270 (DSS) and 318–320 (GMG) each bind NAD(+). K(+) is bound by residues Gly320 and Gly322. Position 323 (Ser323) interacts with IMP. Position 325 (Cys325) interacts with K(+). The active-site Thioimidate intermediate is the Cys325. IMP-binding positions include 358–360 (DGG), 381–382 (GS), and 405–409 (YRGMG). Arg423 acts as the Proton acceptor in catalysis. Residue Gln435 coordinates IMP. Residues Glu494 and Gly495 each contribute to the K(+) site. Positions 510 to 512 (SKL) match the Microbody targeting signal motif.

The protein belongs to the IMPDH/GMPR family. Homotetramer. The cofactor is K(+).

It is found in the glycosome. It carries out the reaction IMP + NAD(+) + H2O = XMP + NADH + H(+). The protein operates within purine metabolism; XMP biosynthesis via de novo pathway; XMP from IMP: step 1/1. Its activity is regulated as follows. Mycophenolic acid (MPA) is a non-competitive inhibitor that prevents formation of the closed enzyme conformation by binding to the same site as the amobile flap. In contrast, mizoribine monophosphate (MZP) is a competitive inhibitor that induces the closed conformation. MPA is a potent inhibitor of mammalian IMPDHs but a poor inhibitor of the bacterial enzymes. MZP is a more potent inhibitor of bacterial IMPDH. In terms of biological role, catalyzes the conversion of inosine 5'-phosphate (IMP) to xanthosine 5'-phosphate (XMP), the first committed and rate-limiting step in the de novo synthesis of guanine nucleotides, and therefore plays an important role in the regulation of cell growth. In Trypanosoma brucei brucei, this protein is Inosine-5'-monophosphate dehydrogenase.